We begin with the raw amino-acid sequence, 504 residues long: Outer capsid protein VP5 (504 aa).

Residues 1–42 (MGKFTSFLKRAGSATKNALTSDAAKRMYKMAGKTLQKVVESE) form an involved in membrane permeabilization region.

This sequence belongs to the orbivirus VP5 family.

The protein resides in the virion. In terms of biological role, VP5 protein is one of the two proteins (with VP2) which constitute the virus particle outer capsid. Acts as a membrane permeabilization protein that mediates release of viral particles from endosomal compartments into the cytoplasm. Permeabilization activity is probably negatively regulated by VP2 and is triggered by endosomal degradation of VP2 and exposure to low pH. This African horse sickness virus 6 (AHSV-6) protein is Outer capsid protein VP5 (Segment-6).